The primary structure comprises 98 residues: Phosphoribosyl-ATP pyrophosphatase (98 aa).

It belongs to the PRA-PH family.

The protein localises to the cytoplasm. The catalysed reaction is 1-(5-phospho-beta-D-ribosyl)-ATP + H2O = 1-(5-phospho-beta-D-ribosyl)-5'-AMP + diphosphate + H(+). The protein operates within amino-acid biosynthesis; L-histidine biosynthesis; L-histidine from 5-phospho-alpha-D-ribose 1-diphosphate: step 2/9. This chain is Phosphoribosyl-ATP pyrophosphatase, found in Pelotomaculum thermopropionicum (strain DSM 13744 / JCM 10971 / SI).